The primary structure comprises 422 residues: Alcohol dehydrogenase 4 (422 aa).

A mitochondrion-targeting transit peptide spans 1-29 (MSILRSPFRLIRSPARFFPSLFHSSCNQS). NAD(+) contacts are provided by Asp-82, Asn-114, Gly-141, Ser-142, Thr-181, Thr-182, Thr-190, Phe-192, Lys-203, and Gly-225. Residues Asp-237, His-241, and His-306 each coordinate Fe(2+). Residues His-310 and His-320 each contribute to the NAD(+) site. Position 320 (His-320) interacts with Fe(2+).

Belongs to the iron-containing alcohol dehydrogenase family. Zn(2+) serves as cofactor.

It is found in the mitochondrion matrix. It catalyses the reaction a primary alcohol + NAD(+) = an aldehyde + NADH + H(+). It carries out the reaction a secondary alcohol + NAD(+) = a ketone + NADH + H(+). The catalysed reaction is ethanol + NAD(+) = acetaldehyde + NADH + H(+). Its function is as follows. Involved in ethanol oxidation in mitochondria. The protein is Alcohol dehydrogenase 4 (adh4) of Schizosaccharomyces pombe (strain 972 / ATCC 24843) (Fission yeast).